The chain runs to 43 residues: Cytin chain A (43 aa).

It belongs to the protease inhibitor I13 (potato type I serine protease inhibitor) family. In terms of assembly, heterodimer of an A chain and a B chain, linked by a disulfide bond.

Functionally, inhibitor of chymotrypsin. The protein is Cytin chain A of Theromyzon tessulatum (Duck leech).